Reading from the N-terminus, the 423-residue chain is Imidazolonepropionase (423 aa).

Fe(3+)-binding residues include His-87 and His-89. Residues His-87 and His-89 each contribute to the Zn(2+) site. The 4-imidazolone-5-propanoate site is built by Arg-96, Tyr-159, and His-192. Tyr-159 provides a ligand contact to N-formimidoyl-L-glutamate. Residue His-257 participates in Fe(3+) binding. His-257 contacts Zn(2+). Glu-260 provides a ligand contact to 4-imidazolone-5-propanoate. Asp-331 serves as a coordination point for Fe(3+). Asp-331 provides a ligand contact to Zn(2+). N-formimidoyl-L-glutamate is bound by residues Asn-333 and Gly-335. Ser-336 is a 4-imidazolone-5-propanoate binding site.

It belongs to the metallo-dependent hydrolases superfamily. HutI family. The cofactor is Zn(2+). Fe(3+) serves as cofactor.

The protein resides in the cytoplasm. The catalysed reaction is 4-imidazolone-5-propanoate + H2O = N-formimidoyl-L-glutamate. The protein operates within amino-acid degradation; L-histidine degradation into L-glutamate; N-formimidoyl-L-glutamate from L-histidine: step 3/3. Catalyzes the hydrolytic cleavage of the carbon-nitrogen bond in imidazolone-5-propanoate to yield N-formimidoyl-L-glutamate. It is the third step in the universal histidine degradation pathway. The polypeptide is Imidazolonepropionase (Porphyromonas gingivalis (strain ATCC BAA-308 / W83)).